A 467-amino-acid polypeptide reads, in one-letter code: 26S proteasome regulatory subunit 7 homolog (467 aa).

Disordered stretches follow at residues 1-26 (MPPK…DDKI) and 108-140 (GNGE…DEDD). Residues 117–134 (TDNNNSGNSNSNSNQQST) show a composition bias toward low complexity. Ser-164 and Ser-231 each carry phosphoserine. 250 to 257 (GPPGTGKT) is a binding site for ATP.

Belongs to the AAA ATPase family. In terms of assembly, interacts with UBR1 and CIC1. The N-terminus is blocked.

Its subcellular location is the cytoplasm. It localises to the nucleus. Functionally, the 26S proteasome is involved in the ATP-dependent degradation of ubiquitinated proteins. The regulatory (or ATPase) complex confers ATP dependency and substrate specificity to the 26S complex. This chain is 26S proteasome regulatory subunit 7 homolog (RPT1), found in Saccharomyces cerevisiae (strain ATCC 204508 / S288c) (Baker's yeast).